Consider the following 366-residue polypeptide: Chorismate synthase (366 aa).

2 residues coordinate NADP(+): Arg-48 and Arg-54. FMN is bound by residues 132 to 134 (RSS), 244 to 245 (NA), Gly-289, 304 to 308 (KPTSS), and Arg-330.

Belongs to the chorismate synthase family. Homotetramer. The cofactor is FMNH2.

It carries out the reaction 5-O-(1-carboxyvinyl)-3-phosphoshikimate = chorismate + phosphate. It participates in metabolic intermediate biosynthesis; chorismate biosynthesis; chorismate from D-erythrose 4-phosphate and phosphoenolpyruvate: step 7/7. Catalyzes the anti-1,4-elimination of the C-3 phosphate and the C-6 proR hydrogen from 5-enolpyruvylshikimate-3-phosphate (EPSP) to yield chorismate, which is the branch point compound that serves as the starting substrate for the three terminal pathways of aromatic amino acid biosynthesis. This reaction introduces a second double bond into the aromatic ring system. This is Chorismate synthase from Methylobacterium radiotolerans (strain ATCC 27329 / DSM 1819 / JCM 2831 / NBRC 15690 / NCIMB 10815 / 0-1).